The chain runs to 185 residues: Ribosome-recycling factor (185 aa).

The protein belongs to the RRF family.

The protein localises to the cytoplasm. Its function is as follows. Responsible for the release of ribosomes from messenger RNA at the termination of protein biosynthesis. May increase the efficiency of translation by recycling ribosomes from one round of translation to another. In Corynebacterium urealyticum (strain ATCC 43042 / DSM 7109), this protein is Ribosome-recycling factor.